Reading from the N-terminus, the 258-residue chain is 4-oxalmesaconate hydratase (258 aa).

Residues H28, D31, and H141 each contribute to the Zn(2+) site.

Belongs to the MshB deacetylase family. The cofactor is Zn(2+).

The catalysed reaction is 2-hydroxy-4-oxobutane-1,2,4-tricarboxylate = 4-carboxy-2-hydroxy-cis,cis-muconate + H2O. Functionally, catalyzes the conversion of oxalomesaconic acid enol (OMAenol) to 4-carboxy-4-hydroxy-2-oxoadipic acid (CHA). Mediates the third step of gallate degradation pathway. In Pseudomonas putida (strain ATCC 47054 / DSM 6125 / CFBP 8728 / NCIMB 11950 / KT2440), this protein is 4-oxalmesaconate hydratase (galB).